Here is a 338-residue protein sequence, read N- to C-terminus: Methionine import ATP-binding protein MetN 2 (338 aa).

One can recognise an ABC transporter domain in the interval 2 to 242; that stretch reads IEIEKVCVDF…PQHAFTQQLV (241 aa). 39–46 contributes to the ATP binding site; sequence GTSGAGKS.

It belongs to the ABC transporter superfamily. Methionine importer (TC 3.A.1.24) family. As to quaternary structure, the complex is composed of two ATP-binding proteins (MetN), two transmembrane proteins (MetI) and a solute-binding protein (MetQ).

It localises to the cell inner membrane. The catalysed reaction is L-methionine(out) + ATP + H2O = L-methionine(in) + ADP + phosphate + H(+). The enzyme catalyses D-methionine(out) + ATP + H2O = D-methionine(in) + ADP + phosphate + H(+). Part of the ABC transporter complex MetNIQ involved in methionine import. Responsible for energy coupling to the transport system. In Salmonella paratyphi A (strain ATCC 9150 / SARB42), this protein is Methionine import ATP-binding protein MetN 2.